We begin with the raw amino-acid sequence, 750 residues long: MIIRSPEPEVKILVDRDPIKTSFEEWAKPGHFSRTIAKGPDTTTWIWNLHADAHDFDSHTSDLEEISRKVFSAHFGQLSIIFLWLSGMYFHGARFSNYEAWLSDPTHIGPSAQVVWPIVGQEILNGDVGGGFRGIQITSGFFQIWRASGITSELQLYCTAIGALVFAALMLFAGWFHYHKAAPKLAWFQDVESMLNHHLAGLLGLGSLSWAGHQVHVSLPINQFLNAGVDPKEIPLPHEFILNRDLLAQLYPSFAEGATPFFTLNWSKYSEFLTFRGGLDPVTGGLWLTDIAHHHLAIAILFLIAGHMYRTNWGIGHGIKDILEAHKGPFTGQGHKGLYEILTTLWHAQLSLNLAMLGSLTIVVAHHMYSMPPYPYLATDYATQLSLFTHHMWIGGFLIVGAAAHAAIFMVRDYDPTNRYNDLLDRVLRHRDAIISHLNWVCIFLGFHSFGLYIHNDTMSALGRPQDMFSDTAIQLQPVFAQWIQNTHALAPGVTAPGETASTSLTWGGGELVAVGGKVALLPIPLGTADFLVHHIHAFTIHVTVLILLKGVLFARSSRLIPDKANLGFRFPCDGPGRGGTCQVSAWDHVFLGLFWMYNAISVVIFHFSWKMQSDVWGSISDQGVVTHITGGNFAQSSITINGWLRDFLWAQASQVIQSYGSSLSAYGLFFLGAHFVWAFSLMFLFSGRGYWQELIESIVWAHNKLKVAPATQPRALSIVQGRAVGVTHYLLGGIATTWAFFLARIIAVG.

8 helical membrane passes run 70-93 (VFSA…FHGA), 156-179 (LYCT…FHYH), 195-219 (LNHH…HVSL), 291-309 (IAHH…GHMY), 346-369 (WHAQ…HHMY), 385-411 (LSLF…IFMV), 433-455 (AIIS…LYIH), and 531-549 (FLVH…LILL). [4Fe-4S] cluster is bound by residues C573 and C582. 2 helical membrane-spanning segments follow: residues 589-610 (HVFL…HFSW) and 664-686 (LSAY…MFLF). Position 675 (H675) interacts with chlorophyll a'. Chlorophyll a-binding residues include M683 and Y691. W692 contributes to the phylloquinone binding site. Residues 724–744 (AVGVTHYLLGGIATTWAFFLA) form a helical membrane-spanning segment.

Belongs to the PsaA/PsaB family. In terms of assembly, the PsaA/B heterodimer binds the P700 chlorophyll special pair and subsequent electron acceptors. PSI consists of a core antenna complex that captures photons, and an electron transfer chain that converts photonic excitation into a charge separation. The eukaryotic PSI reaction center is composed of at least 11 subunits. The cofactor is P700 is a chlorophyll a/chlorophyll a' dimer, A0 is one or more chlorophyll a, A1 is one or both phylloquinones and FX is a shared 4Fe-4S iron-sulfur center..

Its subcellular location is the plastid. The protein localises to the chloroplast thylakoid membrane. The catalysed reaction is reduced [plastocyanin] + hnu + oxidized [2Fe-2S]-[ferredoxin] = oxidized [plastocyanin] + reduced [2Fe-2S]-[ferredoxin]. PsaA and PsaB bind P700, the primary electron donor of photosystem I (PSI), as well as the electron acceptors A0, A1 and FX. PSI is a plastocyanin-ferredoxin oxidoreductase, converting photonic excitation into a charge separation, which transfers an electron from the donor P700 chlorophyll pair to the spectroscopically characterized acceptors A0, A1, FX, FA and FB in turn. Oxidized P700 is reduced on the lumenal side of the thylakoid membrane by plastocyanin. This is Photosystem I P700 chlorophyll a apoprotein A1 from Nasturtium officinale (Watercress).